A 502-amino-acid polypeptide reads, in one-letter code: Probable cytosol aminopeptidase 2 (502 aa).

Lys269 and Asp274 together coordinate Mn(2+). Lys281 is a catalytic residue. Positions 292, 351, and 353 each coordinate Mn(2+). Residue Arg355 is part of the active site.

Belongs to the peptidase M17 family. The cofactor is Mn(2+).

The protein localises to the cytoplasm. The catalysed reaction is Release of an N-terminal amino acid, Xaa-|-Yaa-, in which Xaa is preferably Leu, but may be other amino acids including Pro although not Arg or Lys, and Yaa may be Pro. Amino acid amides and methyl esters are also readily hydrolyzed, but rates on arylamides are exceedingly low.. It carries out the reaction Release of an N-terminal amino acid, preferentially leucine, but not glutamic or aspartic acids.. In terms of biological role, presumably involved in the processing and regular turnover of intracellular proteins. Catalyzes the removal of unsubstituted N-terminal amino acids from various peptides. The sequence is that of Probable cytosol aminopeptidase 2 (pepA2) from Shewanella oneidensis (strain ATCC 700550 / JCM 31522 / CIP 106686 / LMG 19005 / NCIMB 14063 / MR-1).